Consider the following 196-residue polypeptide: Transmembrane 4 L6 family member 5 (196 aa).

The Cytoplasmic segment spans residues 1 to 9 (MCTGKCARF). The chain crosses the membrane as a helical span at residues 10 to 30 (VGLSLIPLSLVCIVANALLLV). Over 31–45 (PNGQTTWTKDHLSLQ) the chain is Extracellular. Residues 46–66 (VWLMAGFVGGGLMVLCPGISA) form a helical membrane-spanning segment. Residues 67-89 (VRAGGKGCCGAGCCGNRCRMLRS) are Cytoplasmic-facing. Residues 90–110 (VFCSAIGLLGAIYCLSVSGTG) traverse the membrane as a helical segment. The tract at residues 90 to 196 (VFCSAIGLLG…DCRKKQGSSQ (107 aa)) is interaction with MTOR and CASTOR1. Over 111 to 156 (LRIGPQCLMNGSWDYHFQDTAGSYLLNRTQWNLCVEPPDVVLWNVT) the chain is Extracellular. N-linked (GlcNAc...) asparagine glycosylation occurs at Asn-120. 123-128 (WDYHFQ) is a binding site for L-arginine. Asn-137 and Asn-154 each carry an N-linked (GlcNAc...) asparagine glycan. A helical transmembrane segment spans residues 157–177 (LFSLLVAASCLEILLCGVQLV). Residues 178 to 196 (NASIGVLCGDCRKKQGSSQ) lie on the Cytoplasmic side of the membrane.

Belongs to the L6 tetraspanin family. Interacts with MTOR; the interaction is positively regulated by arginine and is negatively regulated by leucine. Interacts with SLC38A9. Interacts with SLC7A1; the interaction is negatively regulated by arginine. Interacts with CASTOR1; the interaction is positively regulated by leucine and is negatively regulated by arginine.

It is found in the lysosome membrane. It localises to the cell membrane. Its function is as follows. Acts as a lysosomal membrane arginine sensor. Forms a complex with MTOR and SLC38A9 on lysosomal membranes in an arginine-regulated manner, leading to arginine efflux which enables the activation of mTORC1 which subsequently leads to RPS6KB1 and EIF4EBP1 phosphorylations. Facilitates cell cycle G1/S phase progression and the translocation of the CDK4-CCND1 complex into the nucleus. CDKN1B and RHOA/ROCK signaling activity are involved in TM4SF5-mediated acceleration of G1/S phase progression. The polypeptide is Transmembrane 4 L6 family member 5 (TM4SF5) (Bos taurus (Bovine)).